A 207-amino-acid polypeptide reads, in one-letter code: Small ribosomal subunit protein uS4 (207 aa).

Residues 31 to 53 (KAKFDSKPGQHGRTSGTRTSDFG) are disordered. The span at 42–52 (GRTSGTRTSDF) shows a compositional bias: polar residues. In terms of domain architecture, S4 RNA-binding spans 97–158 (SRLDNVVYRM…KSKKQTRVTE (62 aa)).

The protein belongs to the universal ribosomal protein uS4 family. As to quaternary structure, part of the 30S ribosomal subunit. Contacts protein S5. The interaction surface between S4 and S5 is involved in control of translational fidelity.

In terms of biological role, one of the primary rRNA binding proteins, it binds directly to 16S rRNA where it nucleates assembly of the body of the 30S subunit. Functionally, with S5 and S12 plays an important role in translational accuracy. The sequence is that of Small ribosomal subunit protein uS4 from Polaromonas sp. (strain JS666 / ATCC BAA-500).